A 146-amino-acid chain; its full sequence is Hemoglobin subunit beta (146 aa).

Val-1 carries the N-acetylvaline modification. One can recognise a Globin domain in the interval 2-146; the sequence is HLSSEEKGLI…VANALAHKYH (145 aa). Position 12 is a phosphothreonine (Thr-12). Lys-59 is subject to N6-acetyllysine. His-63 is a heme b binding site. Lys-82 is modified (N6-acetyllysine). Position 92 (His-92) interacts with heme b. S-nitrosocysteine is present on Cys-93. The residue at position 144 (Lys-144) is an N6-acetyllysine.

It belongs to the globin family. In terms of assembly, heterotetramer of two alpha chains and two beta chains. In terms of tissue distribution, red blood cells.

Its function is as follows. Involved in oxygen transport from the lung to the various peripheral tissues. The sequence is that of Hemoglobin subunit beta (HBB) from Potorous tridactylus (Potoroo).